We begin with the raw amino-acid sequence, 666 residues long: ATP synthase subunit alpha 2 (666 aa).

182–189 (GDRATGKT) contributes to the ATP binding site. A disordered region spans residues 527–666 (MPAEDAAGDI…DAEAEARHKR (140 aa)). The span at 545-590 (ARGDADRDADHGANREVSREVSPEASREVSREVSCEVSHEADRDAA) shows a compositional bias: basic and acidic residues. The segment covering 591–601 (ADAARVAGRAP) has biased composition (low complexity). A compositionally biased stretch (basic and acidic residues) spans 623 to 641 (ADGDRASASRPRPDARGDA).

The protein belongs to the ATPase alpha/beta chains family. As to quaternary structure, F-type ATPases have 2 components, CF(1) - the catalytic core - and CF(0) - the membrane proton channel. CF(1) has five subunits: alpha(3), beta(3), gamma(1), delta(1), epsilon(1). CF(0) has three main subunits: a(1), b(2) and c(9-12). The alpha and beta chains form an alternating ring which encloses part of the gamma chain. CF(1) is attached to CF(0) by a central stalk formed by the gamma and epsilon chains, while a peripheral stalk is formed by the delta and b chains.

It is found in the cell inner membrane. It catalyses the reaction ATP + H2O + 4 H(+)(in) = ADP + phosphate + 5 H(+)(out). Produces ATP from ADP in the presence of a proton gradient across the membrane. The alpha chain is a regulatory subunit. This Burkholderia pseudomallei (strain K96243) protein is ATP synthase subunit alpha 2.